The sequence spans 256 residues: Hydroxyethylthiazole kinase (256 aa).

Residue Met-37 coordinates substrate. ATP is bound by residues Lys-113 and Thr-159. Substrate is bound at residue Gly-186.

Belongs to the Thz kinase family. Mg(2+) is required as a cofactor.

The enzyme catalyses 5-(2-hydroxyethyl)-4-methylthiazole + ATP = 4-methyl-5-(2-phosphooxyethyl)-thiazole + ADP + H(+). It participates in cofactor biosynthesis; thiamine diphosphate biosynthesis; 4-methyl-5-(2-phosphoethyl)-thiazole from 5-(2-hydroxyethyl)-4-methylthiazole: step 1/1. In terms of biological role, catalyzes the phosphorylation of the hydroxyl group of 4-methyl-5-beta-hydroxyethylthiazole (THZ). The protein is Hydroxyethylthiazole kinase of Exiguobacterium sibiricum (strain DSM 17290 / CCUG 55495 / CIP 109462 / JCM 13490 / 255-15).